We begin with the raw amino-acid sequence, 127 residues long: Ribosome-binding factor A (127 aa).

It belongs to the RbfA family. In terms of assembly, monomer. Binds 30S ribosomal subunits, but not 50S ribosomal subunits or 70S ribosomes.

It is found in the cytoplasm. In terms of biological role, one of several proteins that assist in the late maturation steps of the functional core of the 30S ribosomal subunit. Associates with free 30S ribosomal subunits (but not with 30S subunits that are part of 70S ribosomes or polysomes). Required for efficient processing of 16S rRNA. May interact with the 5'-terminal helix region of 16S rRNA. The protein is Ribosome-binding factor A of Chloroflexus aurantiacus (strain ATCC 29366 / DSM 635 / J-10-fl).